The primary structure comprises 702 residues: Ribosomal RNA large subunit methyltransferase K/L (702 aa).

The THUMP domain occupies 43–154; sequence LVYQSLMWSR…KETASIALDL (112 aa).

It belongs to the methyltransferase superfamily. RlmKL family.

The protein resides in the cytoplasm. The enzyme catalyses guanosine(2445) in 23S rRNA + S-adenosyl-L-methionine = N(2)-methylguanosine(2445) in 23S rRNA + S-adenosyl-L-homocysteine + H(+). It catalyses the reaction guanosine(2069) in 23S rRNA + S-adenosyl-L-methionine = N(2)-methylguanosine(2069) in 23S rRNA + S-adenosyl-L-homocysteine + H(+). Specifically methylates the guanine in position 2445 (m2G2445) and the guanine in position 2069 (m7G2069) of 23S rRNA. In Escherichia coli O6:H1 (strain CFT073 / ATCC 700928 / UPEC), this protein is Ribosomal RNA large subunit methyltransferase K/L.